The primary structure comprises 678 residues: F-box/LRR-repeat protein 5 (678 aa).

A hemerythrin-like region spans residues 1 to 159 (MAPFPDEVDL…IKKKVIAQHC (159 aa)). Histidine 15, histidine 57, glutamate 58, glutamate 61, histidine 80, histidine 126, and glutamate 130 together coordinate Fe(3+). One can recognise an F-box domain in the interval 202-248 (SSSISSLPPEVMLNIFTYLNPQDLCRCSQVNTEWAQLAKTGSLWRHL). The tract at residues 285–308 (YQEWDEDADIDESEETGEEEDSSI) is disordered. The span at 287-306 (EWDEDADIDESEETGEEEDS) shows a compositional bias: acidic residues. LRR repeat units lie at residues 314-340 (EKEL…VLAY), 341-366 (SSAT…DLTQ), 367-392 (TDIS…DLSG), 393-420 (CDKI…RLLK), 566-594 (HSDI…SLSG), 595-622 (CHQI…NLSG), and 623-648 (CLNV…HFYY). Residues cysteine 649, cysteine 663, cysteine 673, and cysteine 674 each contribute to the [2Fe-2S] cluster site. The stretch at 655-678 (PHGATASGCQNLQCGFRMCCRSGE) is one LRR 8 repeat.

In terms of assembly, part of a SCF (SKP1-cullin-F-box) protein ligase complex. [2Fe-2S] cluster serves as cofactor. In terms of processing, ubiquitinated upon iron and oxygen depletion, leading to its degradation by the proteasome. Ubiquitination is regulated by the hemerythrin-like region that acts as an oxygen and iron sensor.

It is found in the cytoplasm. The protein resides in the perinuclear region. The protein localises to the nucleus. Its pathway is protein modification; protein ubiquitination. Functionally, component of some SCF (SKP1-cullin-F-box) protein ligase complex that plays a central role in iron homeostasis by promoting the ubiquitination and subsequent degradation of ireb2/irp2. Upon high iron and oxygen level, it specifically recognizes and binds ireb2/irp2, promoting its ubiquitination and degradation by the proteasome. This is F-box/LRR-repeat protein 5 (fbxl5) from Xenopus laevis (African clawed frog).